The primary structure comprises 401 residues: L-rhamnonate dehydratase (401 aa).

Substrate contacts are provided by His-29 and Arg-55. Residues Asp-222, Glu-248, and Glu-276 each contribute to the Mg(2+) site. His-325 functions as the Proton acceptor in the catalytic mechanism. Glu-345 provides a ligand contact to substrate.

Belongs to the mandelate racemase/muconate lactonizing enzyme family. RhamD subfamily. Homooctamer; tetramer of dimers. It depends on Mg(2+) as a cofactor.

The catalysed reaction is L-rhamnonate = 2-dehydro-3-deoxy-L-rhamnonate + H2O. Its function is as follows. Catalyzes the dehydration of L-rhamnonate to 2-keto-3-deoxy-L-rhamnonate (KDR). In Salmonella heidelberg (strain SL476), this protein is L-rhamnonate dehydratase.